The sequence spans 122 residues: ATP synthase epsilon chain (122 aa).

Belongs to the ATPase epsilon chain family. F-type ATPases have 2 components, CF(1) - the catalytic core - and CF(0) - the membrane proton channel. CF(1) has five subunits: alpha(3), beta(3), gamma(1), delta(1), epsilon(1). CF(0) has three main subunits: a, b and c.

The protein resides in the cell membrane. Produces ATP from ADP in the presence of a proton gradient across the membrane. The chain is ATP synthase epsilon chain from Rhodococcus erythropolis (strain PR4 / NBRC 100887).